The chain runs to 315 residues: Protein-L-isoaspartate O-methyltransferase (315 aa).

Disordered regions lie at residues 1 to 47 (MSGE…KPAA) and 59 to 89 (RALP…AAPK). The span at 14–34 (EDLKRAPRKSEVRSGSGERHA) shows a compositional bias: basic and acidic residues. Low complexity-rich tracts occupy residues 35–47 (ASAV…KPAA) and 59–81 (RALP…LKPA). S162 is a catalytic residue.

It belongs to the methyltransferase superfamily. L-isoaspartyl/D-aspartyl protein methyltransferase family.

It is found in the cytoplasm. The catalysed reaction is [protein]-L-isoaspartate + S-adenosyl-L-methionine = [protein]-L-isoaspartate alpha-methyl ester + S-adenosyl-L-homocysteine. In terms of biological role, catalyzes the methyl esterification of L-isoaspartyl residues in peptides and proteins that result from spontaneous decomposition of normal L-aspartyl and L-asparaginyl residues. It plays a role in the repair and/or degradation of damaged proteins. This chain is Protein-L-isoaspartate O-methyltransferase, found in Burkholderia ambifaria (strain MC40-6).